The primary structure comprises 722 residues: Mesentericin-Y105 transport/processing ATP-binding protein MesD (722 aa).

Residues 16-143 (QVDERDCGVA…EEWTGVSIFI (128 aa)) enclose the Peptidase C39 domain. Residue Cys22 is part of the active site. Helical transmembrane passes span 171 to 191 (LLVI…ILGS), 210 to 230 (LGIV…LSYA), 242 to 262 (LSID…MSFF), 287 to 307 (TMLS…VLVV), 311 to 331 (TLFL…WLFM), 401 to 421 (SLLQ…LVMT), 429 to 449 (LITY…IINL), and 518 to 538 (IALV…LVNF). The 283-residue stretch at 173-455 (VINIVIAALL…IINLQTKLQQ (283 aa)) folds into the ABC transmembrane type-1 domain. In terms of domain architecture, ABC transporter spans 489–722 (LVADHITYKY…GGFYASLFNH (234 aa)). Residue 522 to 529 (GISGSGKS) participates in ATP binding.

It belongs to the ABC transporter superfamily.

The protein resides in the cell membrane. Involved in the export process of the bacteriocin mesentericin-Y105. This is Mesentericin-Y105 transport/processing ATP-binding protein MesD (mesD) from Leuconostoc mesenteroides.